The following is a 129-amino-acid chain: Small ribosomal subunit protein uS11 (129 aa).

The protein belongs to the universal ribosomal protein uS11 family. As to quaternary structure, part of the 30S ribosomal subunit. Interacts with proteins S7 and S18. Binds to IF-3.

In terms of biological role, located on the platform of the 30S subunit, it bridges several disparate RNA helices of the 16S rRNA. Forms part of the Shine-Dalgarno cleft in the 70S ribosome. This Geobacillus stearothermophilus (Bacillus stearothermophilus) protein is Small ribosomal subunit protein uS11.